Consider the following 240-residue polypeptide: Glutathione S-transferase theta-1 (240 aa).

Residues 2–82 (VLELYLDLLS…YLAHKYKVPD (81 aa)) form the GST N-terminal domain. Residues histidine 40, 53-54 (KV), and 66-67 (ES) each bind glutathione. The 136-residue stretch at 88–223 (DLQARARVDE…ILKVRDCPPA (136 aa)) folds into the GST C-terminal domain.

Belongs to the GST superfamily. Theta family. In terms of assembly, homodimer. In liver, highest expression found in central vein limiting plate hepatocytes. In lung, expressed mainly in club cells of the bronchiolar epithelium and, at low levels, in type II alveolar cells.

Its subcellular location is the cytoplasm. The enzyme catalyses RX + glutathione = an S-substituted glutathione + a halide anion + H(+). In terms of biological role, conjugation of reduced glutathione to a wide number of exogenous and endogenous hydrophobic electrophiles. Also binds steroids, bilirubin, carcinogens and numerous organic anions. Has dichloromethane dehalogenase activity. The chain is Glutathione S-transferase theta-1 (Gstt1) from Rattus norvegicus (Rat).